We begin with the raw amino-acid sequence, 478 residues long: UDP-N-acetylmuramate--L-alanine ligase (478 aa).

Belongs to the MurCDEF family.

It localises to the cytoplasm. The catalysed reaction is UDP-N-acetyl-alpha-D-muramate + L-alanine + ATP = UDP-N-acetyl-alpha-D-muramoyl-L-alanine + ADP + phosphate + H(+). It functions in the pathway cell wall biogenesis; peptidoglycan biosynthesis. Cell wall formation. The sequence is that of UDP-N-acetylmuramate--L-alanine ligase (murC) from Synechococcus elongatus (strain ATCC 33912 / PCC 7942 / FACHB-805) (Anacystis nidulans R2).